A 267-amino-acid polypeptide reads, in one-letter code: Distal basal body ring component protein (267 aa).

The first 29 residues, 1 to 29 (MKAFLFAAAATLVITALSAPAFAGTPVTL), serve as a signal peptide directing secretion.

As to quaternary structure, flaD is a subunit of the flagellar transenvelope basal body.

The protein resides in the periplasm. Its subcellular location is the bacterial flagellum basal body. In terms of biological role, flaD might be the structural protein of the distal basal body ring P, or it is necessary for the assembly of the P ring. The sequence is that of Distal basal body ring component protein (flaD) from Caulobacter vibrioides (strain ATCC 19089 / CIP 103742 / CB 15) (Caulobacter crescentus).